The primary structure comprises 351 residues: Phospho-N-acetylmuramoyl-pentapeptide-transferase (351 aa).

Helical transmembrane passes span 17-37 (TAYA…FIIL), 63-83 (IPTM…FFWI), 85-105 (LWNV…CLGF), 135-155 (ISVT…YFPF), 158-178 (SLKL…LISA), 190-210 (GLAI…AYLT), 230-250 (LVIF…FNAY), 254-274 (IMMG…TALI), 279-299 (ILFA…IIQV), and 328-348 (QVVI…LSTL).

The protein belongs to the glycosyltransferase 4 family. MraY subfamily. Mg(2+) is required as a cofactor.

It localises to the cell inner membrane. It carries out the reaction UDP-N-acetyl-alpha-D-muramoyl-L-alanyl-gamma-D-glutamyl-meso-2,6-diaminopimeloyl-D-alanyl-D-alanine + di-trans,octa-cis-undecaprenyl phosphate = di-trans,octa-cis-undecaprenyl diphospho-N-acetyl-alpha-D-muramoyl-L-alanyl-D-glutamyl-meso-2,6-diaminopimeloyl-D-alanyl-D-alanine + UMP. It functions in the pathway cell wall biogenesis; peptidoglycan biosynthesis. Its function is as follows. Catalyzes the initial step of the lipid cycle reactions in the biosynthesis of the cell wall peptidoglycan: transfers peptidoglycan precursor phospho-MurNAc-pentapeptide from UDP-MurNAc-pentapeptide onto the lipid carrier undecaprenyl phosphate, yielding undecaprenyl-pyrophosphoryl-MurNAc-pentapeptide, known as lipid I. This Borrelia hermsii (strain HS1 / DAH) protein is Phospho-N-acetylmuramoyl-pentapeptide-transferase.